Consider the following 289-residue polypeptide: tRNA pseudouridine synthase B (289 aa).

Asp-38 serves as the catalytic Nucleophile.

It belongs to the pseudouridine synthase TruB family. Type 1 subfamily.

It catalyses the reaction uridine(55) in tRNA = pseudouridine(55) in tRNA. Responsible for synthesis of pseudouridine from uracil-55 in the psi GC loop of transfer RNAs. This Clostridium acetobutylicum (strain ATCC 824 / DSM 792 / JCM 1419 / IAM 19013 / LMG 5710 / NBRC 13948 / NRRL B-527 / VKM B-1787 / 2291 / W) protein is tRNA pseudouridine synthase B.